Reading from the N-terminus, the 264-residue chain is Transmembrane protein 41A (264 aa).

Residues 1 to 17 (MRPLLGLLLVFAGCTFA) form the signal peptide. The next 5 helical transmembrane spans lie at 67 to 87 (AYVFLLFCGAYLYKQGFAIPG), 100 to 122 (GPWLGLLLCCVLTSVGATCCYLL), 153 to 173 (LFFFLLFLRLFPMTPNWFLNL), 175 to 195 (APILNIPIVQFFFSVLIGLIP), and 219 to 239 (WDTVFKLLAIAMVALIPGTLI). The interval 96–207 (GALFGPWLGL…FICVQTGSIL (112 aa)) is VTT domain. Asparagine 250 carries N-linked (GlcNAc...) asparagine glycosylation.

The protein belongs to the TMEM41 family.

The protein localises to the membrane. This is Transmembrane protein 41A (TMEM41A) from Homo sapiens (Human).